The primary structure comprises 214 residues: Pyridoxine/pyridoxamine 5'-phosphate oxidase (214 aa).

Substrate-binding positions include 10 to 13 (RLNY) and lysine 68. Residues 63–68 (RMVLLK), 78–79 (YT), lysine 85, and glutamine 107 contribute to the FMN site. Residues tyrosine 125, arginine 129, and serine 133 each contribute to the substrate site. Residues 142-143 (QS) and tryptophan 187 each bind FMN. 193–195 (RLH) provides a ligand contact to substrate. Arginine 197 is an FMN binding site.

Belongs to the pyridoxamine 5'-phosphate oxidase family. As to quaternary structure, homodimer. The cofactor is FMN.

It catalyses the reaction pyridoxamine 5'-phosphate + O2 + H2O = pyridoxal 5'-phosphate + H2O2 + NH4(+). It carries out the reaction pyridoxine 5'-phosphate + O2 = pyridoxal 5'-phosphate + H2O2. It participates in cofactor metabolism; pyridoxal 5'-phosphate salvage; pyridoxal 5'-phosphate from pyridoxamine 5'-phosphate: step 1/1. Its pathway is cofactor metabolism; pyridoxal 5'-phosphate salvage; pyridoxal 5'-phosphate from pyridoxine 5'-phosphate: step 1/1. Catalyzes the oxidation of either pyridoxine 5'-phosphate (PNP) or pyridoxamine 5'-phosphate (PMP) into pyridoxal 5'-phosphate (PLP). This Synechocystis sp. (strain ATCC 27184 / PCC 6803 / Kazusa) protein is Pyridoxine/pyridoxamine 5'-phosphate oxidase.